The chain runs to 270 residues: Acyl-[acyl-carrier-protein]--UDP-N-acetylglucosamine O-acyltransferase (270 aa).

This sequence belongs to the transferase hexapeptide repeat family. LpxA subfamily. As to quaternary structure, homotrimer.

It is found in the cytoplasm. It catalyses the reaction a (3R)-hydroxyacyl-[ACP] + UDP-N-acetyl-alpha-D-glucosamine = a UDP-3-O-[(3R)-3-hydroxyacyl]-N-acetyl-alpha-D-glucosamine + holo-[ACP]. The protein operates within glycolipid biosynthesis; lipid IV(A) biosynthesis; lipid IV(A) from (3R)-3-hydroxytetradecanoyl-[acyl-carrier-protein] and UDP-N-acetyl-alpha-D-glucosamine: step 1/6. Functionally, involved in the biosynthesis of lipid A, a phosphorylated glycolipid that anchors the lipopolysaccharide to the outer membrane of the cell. This is Acyl-[acyl-carrier-protein]--UDP-N-acetylglucosamine O-acyltransferase from Bartonella tribocorum (strain CIP 105476 / IBS 506).